A 192-amino-acid polypeptide reads, in one-letter code: Phosphoheptose isomerase (192 aa).

Residues 37 to 192 (IAASLRDGGK…IMLIEKELAV (156 aa)) enclose the SIS domain. 52 to 54 (NGG) is a substrate binding site. His61 and Glu65 together coordinate Zn(2+). Substrate contacts are provided by residues Glu65, 93-94 (ND), 119-121 (STS), Ser124, and Gln172. Positions 172 and 180 each coordinate Zn(2+).

Belongs to the SIS family. GmhA subfamily. As to quaternary structure, homotetramer. Requires Zn(2+) as cofactor.

It localises to the cytoplasm. The enzyme catalyses 2 D-sedoheptulose 7-phosphate = D-glycero-alpha-D-manno-heptose 7-phosphate + D-glycero-beta-D-manno-heptose 7-phosphate. It participates in carbohydrate biosynthesis; D-glycero-D-manno-heptose 7-phosphate biosynthesis; D-glycero-alpha-D-manno-heptose 7-phosphate and D-glycero-beta-D-manno-heptose 7-phosphate from sedoheptulose 7-phosphate: step 1/1. Catalyzes the isomerization of sedoheptulose 7-phosphate in D-glycero-D-manno-heptose 7-phosphate. The polypeptide is Phosphoheptose isomerase (Tolumonas auensis (strain DSM 9187 / NBRC 110442 / TA 4)).